Consider the following 334-residue polypeptide: F-box protein AUF1 (334 aa).

The 49-residue stretch at 1–49 (MDAFDAIPDPVVIDILNRVGDVKTLIRCRSVSKRFNSLATQSESLLLQL) folds into the F-box domain.

As to quaternary structure, part of a SCF (ASK-cullin-F-box) protein ligase complex. Interacts with SKP1A/ASK1, SKP1B/ASK2, ASK11 and ASK13.

The protein localises to the nucleus. It functions in the pathway protein modification; protein ubiquitination. Its function is as follows. Component of SCF(ASK-cullin-F-box) E3 ubiquitin ligase complexes, which may mediate the ubiquitination and subsequent proteasomal degradation of target proteins. Involved in the control of basipetal and acropetal auxin transport by promoting the distribution and expression of the auxin transporter PIN2. Promotes cytokinin-mediated cell expansion in the root elongation and differentiation zone, without affecting root cell division. This is F-box protein AUF1 from Arabidopsis thaliana (Mouse-ear cress).